The chain runs to 556 residues: Endonuclease/exonuclease/phosphatase family domain-containing protein 1 (556 aa).

Residues 39–68 (ERLNINTATEEELMTLPGVTRQVAQNIVEY) enclose the HhH domain.

The polypeptide is Endonuclease/exonuclease/phosphatase family domain-containing protein 1 (eepd1) (Xenopus laevis (African clawed frog)).